Reading from the N-terminus, the 402-residue chain is Tyrosine--tRNA ligase (402 aa).

Residues 47–56 (PTAPDLHLGH) carry the 'HIGH' region motif. The 'KMSKS' region signature appears at 232-236 (KMSKS). Position 235 (Lys-235) interacts with ATP. The 61-residue stretch at 341–401 (VGILDVLKQI…GKKRFMKLNI (61 aa)) folds into the S4 RNA-binding domain.

Belongs to the class-I aminoacyl-tRNA synthetase family. TyrS type 2 subfamily. Homodimer.

It localises to the cytoplasm. It catalyses the reaction tRNA(Tyr) + L-tyrosine + ATP = L-tyrosyl-tRNA(Tyr) + AMP + diphosphate + H(+). Its function is as follows. Catalyzes the attachment of tyrosine to tRNA(Tyr) in a two-step reaction: tyrosine is first activated by ATP to form Tyr-AMP and then transferred to the acceptor end of tRNA(Tyr). This Helicobacter pylori (strain ATCC 700392 / 26695) (Campylobacter pylori) protein is Tyrosine--tRNA ligase.